The following is a 758-amino-acid chain: 5-methyltetrahydropteroyltriglutamate--homocysteine methyltransferase (758 aa).

5-methyltetrahydropteroyltri-L-glutamate is bound by residues 17–20 and Lys117; that span reads RELK. L-homocysteine contacts are provided by residues 434–436 and Glu487; that span reads IGS. L-methionine is bound by residues 434 to 436 and Glu487; that span reads IGS. 5-methyltetrahydropteroyltri-L-glutamate is bound by residues 518–519 and Trp564; that span reads RC. Residue Asp602 participates in L-homocysteine binding. Asp602 contributes to the L-methionine binding site. 5-methyltetrahydropteroyltri-L-glutamate is bound at residue Glu608. Residues His644, Cys646, and Glu668 each contribute to the Zn(2+) site. Residue His697 is the Proton donor of the active site. A Zn(2+)-binding site is contributed by Cys729.

It belongs to the vitamin-B12 independent methionine synthase family. Zn(2+) is required as a cofactor.

The enzyme catalyses 5-methyltetrahydropteroyltri-L-glutamate + L-homocysteine = tetrahydropteroyltri-L-glutamate + L-methionine. It participates in amino-acid biosynthesis; L-methionine biosynthesis via de novo pathway; L-methionine from L-homocysteine (MetE route): step 1/1. Its function is as follows. Catalyzes the transfer of a methyl group from 5-methyltetrahydrofolate to homocysteine resulting in methionine formation. The chain is 5-methyltetrahydropteroyltriglutamate--homocysteine methyltransferase from Yersinia enterocolitica serotype O:8 / biotype 1B (strain NCTC 13174 / 8081).